A 252-amino-acid polypeptide reads, in one-letter code: 2-succinyl-6-hydroxy-2,4-cyclohexadiene-1-carboxylate synthase (252 aa).

Belongs to the AB hydrolase superfamily. MenH family. Monomer.

The enzyme catalyses 5-enolpyruvoyl-6-hydroxy-2-succinyl-cyclohex-3-ene-1-carboxylate = (1R,6R)-6-hydroxy-2-succinyl-cyclohexa-2,4-diene-1-carboxylate + pyruvate. It participates in quinol/quinone metabolism; 1,4-dihydroxy-2-naphthoate biosynthesis; 1,4-dihydroxy-2-naphthoate from chorismate: step 3/7. Its pathway is quinol/quinone metabolism; menaquinone biosynthesis. Functionally, catalyzes a proton abstraction reaction that results in 2,5-elimination of pyruvate from 2-succinyl-5-enolpyruvyl-6-hydroxy-3-cyclohexene-1-carboxylate (SEPHCHC) and the formation of 2-succinyl-6-hydroxy-2,4-cyclohexadiene-1-carboxylate (SHCHC). This Escherichia coli O157:H7 protein is 2-succinyl-6-hydroxy-2,4-cyclohexadiene-1-carboxylate synthase.